Consider the following 453-residue polypeptide: Putative long chain fatty acid-CoA ligase VraA (453 aa).

Belongs to the ATP-dependent AMP-binding enzyme family.

The protein is Putative long chain fatty acid-CoA ligase VraA (vraA) of Staphylococcus epidermidis (strain ATCC 35984 / DSM 28319 / BCRC 17069 / CCUG 31568 / BM 3577 / RP62A).